The sequence spans 505 residues: Probable cytochrome P450 28c1 (505 aa).

Residue Cys444 participates in heme binding.

The protein belongs to the cytochrome P450 family. Requires heme as cofactor.

It is found in the endoplasmic reticulum membrane. Its subcellular location is the microsome membrane. May be involved in the metabolism of insect hormones and in the breakdown of synthetic insecticides. The sequence is that of Probable cytochrome P450 28c1 (Cyp28c1) from Drosophila melanogaster (Fruit fly).